Here is a 370-residue protein sequence, read N- to C-terminus: Histidinol-phosphate aminotransferase 1 (370 aa).

The residue at position 222 (Lys222) is an N6-(pyridoxal phosphate)lysine.

This sequence belongs to the class-II pyridoxal-phosphate-dependent aminotransferase family. Histidinol-phosphate aminotransferase subfamily. As to quaternary structure, homodimer. The cofactor is pyridoxal 5'-phosphate.

It carries out the reaction L-histidinol phosphate + 2-oxoglutarate = 3-(imidazol-4-yl)-2-oxopropyl phosphate + L-glutamate. It functions in the pathway amino-acid biosynthesis; L-histidine biosynthesis; L-histidine from 5-phospho-alpha-D-ribose 1-diphosphate: step 7/9. The polypeptide is Histidinol-phosphate aminotransferase 1 (Bacillus cereus (strain ATCC 10987 / NRS 248)).